A 463-amino-acid polypeptide reads, in one-letter code: Fumarate hydratase class II (463 aa).

Residues 97-99 (SGT), 128-131 (HPND), 138-140 (SSN), and Thr186 contribute to the substrate site. Catalysis depends on His187, which acts as the Proton donor/acceptor. Ser317 is an active-site residue. Substrate contacts are provided by residues Ser318 and 323–325 (KVN).

Belongs to the class-II fumarase/aspartase family. Fumarase subfamily. Homotetramer.

Its subcellular location is the cytoplasm. The enzyme catalyses (S)-malate = fumarate + H2O. The protein operates within carbohydrate metabolism; tricarboxylic acid cycle; (S)-malate from fumarate: step 1/1. In terms of biological role, involved in the TCA cycle. Catalyzes the stereospecific interconversion of fumarate to L-malate. The polypeptide is Fumarate hydratase class II (Helicobacter pylori (strain J99 / ATCC 700824) (Campylobacter pylori J99)).